We begin with the raw amino-acid sequence, 288 residues long: Transmembrane and coiled-coil domain-containing protein 5A (288 aa).

Residues 10-189 (KKNIISLNMD…ELETGYLERE (180 aa)) adopt a coiled-coil conformation. A helical transmembrane segment spans residues 227–249 (SLLFSTLFFIRLLGYLIFHLSFI).

It belongs to the TMCO5 family. In terms of tissue distribution, only detected in testis (at protein level).

It localises to the endoplasmic reticulum membrane. The protein localises to the nucleus membrane. This Mus musculus (Mouse) protein is Transmembrane and coiled-coil domain-containing protein 5A (Tmco5a).